The chain runs to 543 residues: Heparanase-like protein 1 (543 aa).

An N-terminal signal peptide occupies residues 1 to 24; sequence MGFRVCVIVVFLGCLLLVPEKTMA. Asn184 carries an N-linked (GlcNAc...) asparagine glycan. The Proton donor role is filled by Glu201. An N-linked (GlcNAc...) asparagine glycan is attached at Asn304. Glu320 (nucleophile) is an active-site residue. Residues Asn425 and Asn428 are each glycosylated (N-linked (GlcNAc...) asparagine).

This sequence belongs to the glycosyl hydrolase 79 family.

It is found in the lysosome membrane. Its subcellular location is the secreted. Its function is as follows. Endoglycosidase which is a cell surface and extracellular matrix-degrading enzyme. Cleaves heparan sulfate proteoglycans (HSPGs) into heparan sulfate side chains and core proteoglycans. The sequence is that of Heparanase-like protein 1 from Arabidopsis thaliana (Mouse-ear cress).